We begin with the raw amino-acid sequence, 128 residues long: MLVKKSQISRKFIEKKSGIVHIQSTTNNTLITLTDLEGNTQFFVSAGTLGFKNSRKSTVYASGAAAEALASKAFNEGYRTIIVKIKGLGYGKKSAIRGLQKSNLVIKQIQEVTPIAHNGCRPPKKRRV.

Belongs to the universal ribosomal protein uS11 family.

The protein resides in the mitochondrion. This chain is Small ribosomal subunit protein uS11m (RPS11), found in Prototheca wickerhamii.